We begin with the raw amino-acid sequence, 228 residues long: 7-cyano-7-deazaguanine synthase (228 aa).

16 to 26 (FSGGQDSTTCL) contributes to the ATP binding site. Residues Cys195, Cys203, Cys206, and Cys209 each contribute to the Zn(2+) site.

It belongs to the QueC family. The cofactor is Zn(2+).

It carries out the reaction 7-carboxy-7-deazaguanine + NH4(+) + ATP = 7-cyano-7-deazaguanine + ADP + phosphate + H2O + H(+). It functions in the pathway purine metabolism; 7-cyano-7-deazaguanine biosynthesis. Its function is as follows. Catalyzes the ATP-dependent conversion of 7-carboxy-7-deazaguanine (CDG) to 7-cyano-7-deazaguanine (preQ(0)). In Haemophilus influenzae (strain ATCC 51907 / DSM 11121 / KW20 / Rd), this protein is 7-cyano-7-deazaguanine synthase.